The primary structure comprises 398 residues: Inner membrane protein YjgN (398 aa).

The Cytoplasmic segment spans residues 1-24; that stretch reads MAQVINEMDVPSHSFVFHGTGERY. Residues 25–45 traverse the membrane as a helical segment; sequence FLICVVNVLLTIITLGIYLPW. Residues 46–73 lie on the Periplasmic side of the membrane; the sequence is ALMKCKRYLYANMEVNGQRFSYGITGGN. The chain crosses the membrane as a helical span at residues 74-94; sequence VFVSCLFFVFFYFAILMTVSA. D95 is a topological domain (cytoplasmic). A helical membrane pass occupies residues 96 to 116; the sequence is MPLVGCVLTLLLLVLLIFMAA. Topologically, residues 117-142 are periplasmic; sequence KGLRHQALMTSLNGVRFSFNCSMKGF. A helical membrane pass occupies residues 143–163; sequence WWVTFFLPILMAIGMGTVFFI. Residues 164–175 lie on the Cytoplasmic side of the membrane; it reads STKMLPANSSSS. Residues 176–196 form a helical membrane-spanning segment; the sequence is VIISMVLMAIVGIVSIGIFNG. At 197–228 the chain is on the periplasmic side; that stretch reads TLYSLVMSFLWSNTSFGIHRFKVKLDTTYCIK. The helical transmembrane segment at 229-249 threads the bilayer; it reads YAILAFLALLPFLAVAGYIIF. Over 250 to 278 the chain is Cytoplasmic; that stretch reads DQILNAYDSSVYANDDIENLQQFMEMQRK. The chain crosses the membrane as a helical span at residues 279–299; the sequence is MIIAQLIYYFGIAVSTSYLTV. The Periplasmic portion of the chain corresponds to 300–333; it reads SLRNHFMSNLSLNDGRIRFRLTLTYHGMLYRMCA. Residues 334 to 354 traverse the membrane as a helical segment; the sequence is LVVISGITGGLAYPLLKIWMI. The Cytoplasmic segment spans residues 355–398; the sequence is DWQAKNTYLLGDLDDLPLINKEEQPDKGFLASISRGVMPSLPFL.

It is found in the cell inner membrane. The polypeptide is Inner membrane protein YjgN (yjgN) (Escherichia coli (strain K12)).